The primary structure comprises 433 residues: Legumain (433 aa).

The first 17 residues, 1 to 17 (MIWEFTVLLSLVLGTGA), serve as a signal peptide directing secretion. The propeptide occupies 18–25 (VPLEDPED). N-linked (GlcNAc...) asparagine glycosylation occurs at Asn-91. The active site involves His-148. An N-linked (GlcNAc...) asparagine glycan is attached at Asn-167. Cys-189 (nucleophile) is an active-site residue. 2 N-linked (GlcNAc...) asparagine glycosylation sites follow: Asn-263 and Asn-272. The propeptide occupies 324 to 433 (DLQESRRLVQ…SMNKVCHGYY (110 aa)). 2 disulfides stabilise this stretch: Cys-378–Cys-412 and Cys-390–Cys-429.

The protein belongs to the peptidase C13 family. Homodimer before autocatalytic removal of the propeptide. Monomer after autocatalytic processing. May interact with integrins. Post-translationally, activated by autocatalytic processing at pH 4. As to expression, detected in kidney (at protein level).

The protein resides in the lysosome. It catalyses the reaction Hydrolysis of proteins and small molecule substrates at -Asn-|-Xaa- bonds.. In terms of biological role, has a strict specificity for hydrolysis of asparaginyl bonds. Can also cleave aspartyl bonds slowly, especially under acidic conditions. Involved in the processing of proteins for MHC class II antigen presentation in the lysosomal/endosomal system. Also involved in MHC class I antigen presentation in cross-presenting dendritic cells by mediating cleavage and maturation of Perforin-2 (MPEG1), thereby promoting antigen translocation in the cytosol. Required for normal lysosomal protein degradation in renal proximal tubules. Required for normal degradation of internalized EGFR. Plays a role in the regulation of cell proliferation via its role in EGFR degradation. This is Legumain (LGMN) from Bos taurus (Bovine).